Reading from the N-terminus, the 433-residue chain is Enolase (433 aa).

An N-acetylserine modification is found at Ser-1. Positions 36 and 157 each coordinate (2R)-2-phosphoglycerate. Catalysis depends on Glu-209, which acts as the Proton donor. 3 residues coordinate Mn(2+): Asp-244, Glu-294, and Asp-319. 3 residues coordinate (2R)-2-phosphoglycerate: Lys-344, Arg-373, and Ser-374. Catalysis depends on Lys-344, which acts as the Proton acceptor.

This sequence belongs to the enolase family. As to quaternary structure, homodimer. The cofactor is Mg(2+).

The protein resides in the cytoplasm. It carries out the reaction (2R)-2-phosphoglycerate = phosphoenolpyruvate + H2O. Its pathway is carbohydrate degradation; glycolysis; pyruvate from D-glyceraldehyde 3-phosphate: step 4/5. With respect to regulation, inhibited by 2-phosphoglycolic acid. In Homarus gammarus (European lobster), this protein is Enolase.